The primary structure comprises 757 residues: Xaa-Pro dipeptidyl-peptidase (757 aa).

Residues serine 348, aspartate 468, and histidine 498 each act as charge relay system in the active site.

The protein belongs to the peptidase S15 family. As to quaternary structure, homodimer.

It localises to the cytoplasm. It catalyses the reaction Hydrolyzes Xaa-Pro-|- bonds to release unblocked, N-terminal dipeptides from substrates including Ala-Pro-|-p-nitroanilide and (sequentially) Tyr-Pro-|-Phe-Pro-|-Gly-Pro-|-Ile.. In terms of biological role, removes N-terminal dipeptides sequentially from polypeptides having unsubstituted N-termini provided that the penultimate residue is proline. The protein is Xaa-Pro dipeptidyl-peptidase of Streptococcus pneumoniae (strain ATCC BAA-255 / R6).